Here is a 287-residue protein sequence, read N- to C-terminus: ATP synthase gamma chain (287 aa).

Belongs to the ATPase gamma chain family. As to quaternary structure, F-type ATPases have 2 components, CF(1) - the catalytic core - and CF(0) - the membrane proton channel. CF(1) has five subunits: alpha(3), beta(3), gamma(1), delta(1), epsilon(1). CF(0) has three main subunits: a, b and c.

Its subcellular location is the cell inner membrane. Functionally, produces ATP from ADP in the presence of a proton gradient across the membrane. The gamma chain is believed to be important in regulating ATPase activity and the flow of protons through the CF(0) complex. The protein is ATP synthase gamma chain of Shigella boydii serotype 4 (strain Sb227).